We begin with the raw amino-acid sequence, 124 residues long: U12-barytoxin-Tl1a (124 aa).

Positions 1-20 (MKTMIAWLVLLTFAAALCFA) are cleaved as a signal peptide. A propeptide spanning residues 21–78 (DEGLKQEHMNERKKSRFREDIPDEISEDLLLQEMEAMEAELLEKEMRMEENRNSREKR) is cleaved from the precursor. 3 disulfides stabilise this stretch: cysteine 79-cysteine 99, cysteine 86-cysteine 104, and cysteine 98-cysteine 118.

It belongs to the neurotoxin 14 (magi-1) family. 04 (ICK-6) subfamily. Expressed by the venom gland.

Its subcellular location is the secreted. In terms of biological role, ion channel inhibitor. The polypeptide is U12-barytoxin-Tl1a (Trittame loki (Brush-footed trapdoor spider)).